Here is a 644-residue protein sequence, read N- to C-terminus: MQTVRMTTAQALVKFLNQQYVEFDGKQQKFVKGIFTIFGHGNVVGLGQALEEDAGELEVYQGRNEQGMANAAMAFAKQKHRKQIMACTSSVGPGSANMITSAATASANNIPVLLLPGDVFATRQPDPVLQQIEQTHDLSISTNDAFRAVSKYWDRINRPEQLMTAMIQAMRVLTNPADTGAVTICLPQDVQGEAWDFPSYFFQKRVHRIERRLPTKASLADAVEMIKRKKKPVMICGGGVRYAEAAEELKQFAETFHIPFGETQAGKSAIESSHPYNLGGIGVTGNVAANTIAKEADLVIGIGTRFTDFTTASKQLFQNEEVEFLNINISEFHANKLDALKVIADAKEALLALIDELQEIDYQSSYTVEIADAKDAWETELSRLHNIRFTCQDFTPEVEGHFDENLNEYVDALGTQLTQTAVIGQINTLLDEDAIIVGAAGSLPGDLQRMWASRKPNTYHMEYGYSCMGYEVAGALGAKLAEPSKEVYAMVGDGSYQMLHSELVTSLQENKKINVLLFDNSGFGCINNLQMGNGMGSFGTEFRYRNQETRKLDGAIMKIDFAASAAGYGVKTYHVTSLEQLQEALIDAKKQTVSTLIDIKVLPKTMTNGYESWWHVGVAEVSKNQSVQAAYESKVSNLQQARSY.

Glu65 is a thiamine diphosphate binding site. The tract at residues Ser442 to Gly522 is thiamine pyrophosphate binding. 2 residues coordinate Mg(2+): Asp493 and Asn520.

It belongs to the TPP enzyme family. The cofactor is Mg(2+). Thiamine diphosphate is required as a cofactor.

The catalysed reaction is 3D-3,5/4-trihydroxycyclohexane-1,2-dione + H2O = 5-deoxy-D-glucuronate + H(+). The protein operates within polyol metabolism; myo-inositol degradation into acetyl-CoA; acetyl-CoA from myo-inositol: step 3/7. Functionally, involved in the cleavage of the C1-C2 bond of 3D-(3,5/4)-trihydroxycyclohexane-1,2-dione (THcHDO) to yield 5-deoxy-glucuronate (5DG). The sequence is that of 3D-(3,5/4)-trihydroxycyclohexane-1,2-dione hydrolase from Bacillus cereus (strain AH820).